The chain runs to 331 residues: N-arachidonyl glycine receptor (331 aa).

Residues 1-26 lie on the Extracellular side of the membrane; the sequence is MAIPSNRDQLALSNGSHPEEYKIAAL. N-linked (GlcNAc...) asparagine glycosylation is present at Asn14. Residues 27-47 form a helical membrane-spanning segment; it reads VFYSCIFLIGLLVNVTALWVF. Over 48–56 the chain is Cytoplasmic; the sequence is SCTTKKRTT. Residues 57-77 traverse the membrane as a helical segment; that stretch reads VTIYMMNVALLDLVFILSLPF. The Extracellular portion of the chain corresponds to 78 to 95; the sequence is RMFYYAKGEWPFGDYFCH. Cys94 and Cys172 are oxidised to a cystine. A helical transmembrane segment spans residues 96–116; it reads ILGALVVFYPSLALWLLALIS. At 117–138 the chain is on the cytoplasmic side; it reads ADRYMAIVQPKYAKELKNTGKA. A helical membrane pass occupies residues 139–159; sequence VLACVGVWIMTLTTTVPLLLL. The Extracellular segment spans residues 160–191; that stretch reads DEDPDKASSPATCLKISDIIHLKAVNVLNFTR. Asn188 carries an N-linked (GlcNAc...) asparagine glycan. The helical transmembrane segment at 192–212 threads the bilayer; sequence LIFFFLIPLFIMIGCYVVIIH. Residues 213-236 are Cytoplasmic-facing; sequence SLLRGQTSKLKPKVKEKSIRIIVT. A helical transmembrane segment spans residues 237–257; the sequence is LLLQVLACFVPFHICFALLML. The Extracellular portion of the chain corresponds to 258–268; it reads QGEENSYSPWG. The chain crosses the membrane as a helical span at residues 269 to 289; the sequence is AFTTFLMNLSTCLDVVLYYIV. The Cytoplasmic segment spans residues 290 to 331; the sequence is SKQFQARVISVMLYRNYLRSVRRKSVRSGSLRSLSNMNSEML. Ser322 is subject to Phosphoserine.

The protein belongs to the G-protein coupled receptor 1 family. In terms of tissue distribution, expressed in testis, spleen and brain (at protein level).

The protein localises to the cell membrane. It localises to the cytoplasmic vesicle membrane. G protein-coupled receptor (GPCR) that plays a role in diverse physiological processes particularly within the immune and nervous systems. Becomes active when triggered by various endogenous ligands including endocannabinoid N-arachidonyl glycine (NAGly), delta-9-tetrahydrocannabinol or resolvin D2/RvD2 derived from the omega-3 fatty acid docosahexaenoic acid (DHA). Upon RvD2 binding, facilitates the resolution of inflammation, aiding in tissue repair and homeostasis. Mechanistically, RvD2 ligation initiates Galphas protein coupling, activation of cAMP-PKA signaling pathway and phosphorylation of STAT3, leading to RvD2-stimulated macrophage phagocytosis. Mediates NAGly-induced process of reorganization of actin filaments and induction of acrosomal exocytosis. Activation by N-arachidonoyl glycine (NAGly) can also induce apoptosis in macrophages. Plays a role in homeostasis of CD8+ subsets of intraepithelial lymphocytes (IELs) (CD8alphaalpha and CD8alphabeta IELs) in small intestine by supporting preferential migration of CD8alphaalpha T-cells to intraepithelial compartment over lamina propria compartment, and by mediating their reconstitution into small intestine after bone marrow transplant. Participates also in hypotensive responses, mediating reduction in intraocular and blood pressure. This is N-arachidonyl glycine receptor from Rattus norvegicus (Rat).